The sequence spans 68 residues: Large ribosomal subunit protein bL33c (68 aa).

The protein belongs to the bacterial ribosomal protein bL33 family.

Its subcellular location is the plastid. The protein localises to the chloroplast. In Nymphaea alba (White water-lily), this protein is Large ribosomal subunit protein bL33c.